The following is a 353-amino-acid chain: D-alanine--D-alanine ligase (353 aa).

The region spanning 141–349 is the ATP-grasp domain; that stretch reads KAAFAAAGLS…LPQLVAELVD (209 aa). 176 to 231 is a binding site for ATP; it reads EQELGYPCFVKPANLGSSVGITKANNRDELLAGLHQAAALDPRLLVEQGVNARELE. Mg(2+) is bound by residues aspartate 302, glutamate 316, and asparagine 318.

Belongs to the D-alanine--D-alanine ligase family. Requires Mg(2+) as cofactor. Mn(2+) serves as cofactor.

It is found in the cytoplasm. The catalysed reaction is 2 D-alanine + ATP = D-alanyl-D-alanine + ADP + phosphate + H(+). The protein operates within cell wall biogenesis; peptidoglycan biosynthesis. Cell wall formation. The chain is D-alanine--D-alanine ligase from Synechococcus sp. (strain WH7803).